Here is a 425-residue protein sequence, read N- to C-terminus: CinA-like protein (425 aa).

The protein belongs to the CinA family.

The polypeptide is CinA-like protein (Trichodesmium erythraeum (strain IMS101)).